The chain runs to 340 residues: Tartrate-resistant acid phosphatase type 5 (340 aa).

An N-terminal signal peptide occupies residues 1–20 (MDTWTVLLILQASLVLPGAV). Residues D41, D79, Y82, and N118 each coordinate Fe cation. Residues N124 and N155 are each glycosylated (N-linked (GlcNAc...) asparagine). C169 and C227 are oxidised to a cystine. Fe cation contacts are provided by H213, H248, and H250.

Fe cation is required as a cofactor.

It localises to the secreted. It carries out the reaction a phosphate monoester + H2O = an alcohol + phosphate. Its function is as follows. Uteroferrin is a phosphoprotein phosphatase, synthesized in response to progesterone. It appears to function in transplacental transport of iron in pig. In Sus scrofa (Pig), this protein is Tartrate-resistant acid phosphatase type 5 (ACP5).